Reading from the N-terminus, the 334-residue chain is ADP-L-glycero-D-manno-heptose-6-epimerase (334 aa).

NADP(+)-binding positions include 11-12 (FI), 32-33 (DN), Lys-39, Lys-54, 77-81 (QGACS), and Asn-94. Tyr-141 serves as the catalytic Proton acceptor. Lys-145 lines the NADP(+) pocket. A substrate-binding site is contributed by Asn-171. Val-172 and Lys-180 together coordinate NADP(+). Lys-180 functions as the Proton acceptor in the catalytic mechanism. Substrate-binding positions include Arg-182, His-189, 203-206 (FGSN), Arg-216, and Tyr-295.

It belongs to the NAD(P)-dependent epimerase/dehydratase family. HldD subfamily. In terms of assembly, homopentamer. NADP(+) is required as a cofactor.

The enzyme catalyses ADP-D-glycero-beta-D-manno-heptose = ADP-L-glycero-beta-D-manno-heptose. Its pathway is nucleotide-sugar biosynthesis; ADP-L-glycero-beta-D-manno-heptose biosynthesis; ADP-L-glycero-beta-D-manno-heptose from D-glycero-beta-D-manno-heptose 7-phosphate: step 4/4. The protein operates within bacterial outer membrane biogenesis; LOS core biosynthesis. Its function is as follows. Catalyzes the interconversion between ADP-D-glycero-beta-D-manno-heptose and ADP-L-glycero-beta-D-manno-heptose via an epimerization at carbon 6 of the heptose. The sequence is that of ADP-L-glycero-D-manno-heptose-6-epimerase from Neisseria meningitidis serogroup A / serotype 4A (strain DSM 15465 / Z2491).